The chain runs to 303 residues: 4-hydroxy-3-methylbut-2-enyl diphosphate reductase (303 aa).

Cysteine 12 is a [4Fe-4S] cluster binding site. Residues histidine 42 and histidine 75 each coordinate (2E)-4-hydroxy-3-methylbut-2-enyl diphosphate. Residues histidine 42 and histidine 75 each contribute to the dimethylallyl diphosphate site. Residues histidine 42 and histidine 75 each coordinate isopentenyl diphosphate. Residue cysteine 97 coordinates [4Fe-4S] cluster. Histidine 125 provides a ligand contact to (2E)-4-hydroxy-3-methylbut-2-enyl diphosphate. Histidine 125 is a binding site for dimethylallyl diphosphate. Histidine 125 is a binding site for isopentenyl diphosphate. Glutamate 127 acts as the Proton donor in catalysis. (2E)-4-hydroxy-3-methylbut-2-enyl diphosphate is bound at residue serine 164. Cysteine 192 is a binding site for [4Fe-4S] cluster. Residues serine 220, serine 221, asparagine 222, and serine 264 each contribute to the (2E)-4-hydroxy-3-methylbut-2-enyl diphosphate site. Dimethylallyl diphosphate-binding residues include serine 220, serine 221, asparagine 222, and serine 264. Residues serine 220, serine 221, asparagine 222, and serine 264 each contribute to the isopentenyl diphosphate site.

The protein belongs to the IspH family. The cofactor is [4Fe-4S] cluster.

The enzyme catalyses isopentenyl diphosphate + 2 oxidized [2Fe-2S]-[ferredoxin] + H2O = (2E)-4-hydroxy-3-methylbut-2-enyl diphosphate + 2 reduced [2Fe-2S]-[ferredoxin] + 2 H(+). It carries out the reaction dimethylallyl diphosphate + 2 oxidized [2Fe-2S]-[ferredoxin] + H2O = (2E)-4-hydroxy-3-methylbut-2-enyl diphosphate + 2 reduced [2Fe-2S]-[ferredoxin] + 2 H(+). It functions in the pathway isoprenoid biosynthesis; dimethylallyl diphosphate biosynthesis; dimethylallyl diphosphate from (2E)-4-hydroxy-3-methylbutenyl diphosphate: step 1/1. It participates in isoprenoid biosynthesis; isopentenyl diphosphate biosynthesis via DXP pathway; isopentenyl diphosphate from 1-deoxy-D-xylulose 5-phosphate: step 6/6. In terms of biological role, catalyzes the conversion of 1-hydroxy-2-methyl-2-(E)-butenyl 4-diphosphate (HMBPP) into a mixture of isopentenyl diphosphate (IPP) and dimethylallyl diphosphate (DMAPP). Acts in the terminal step of the DOXP/MEP pathway for isoprenoid precursor biosynthesis. This is 4-hydroxy-3-methylbut-2-enyl diphosphate reductase from Neorickettsia sennetsu (strain ATCC VR-367 / Miyayama) (Ehrlichia sennetsu).